A 401-amino-acid polypeptide reads, in one-letter code: Subtilisin-like protease 7 (401 aa).

The signal sequence occupies residues 1–20; that stretch reads MGFITKAIPLALAAASVING. A propeptide spanning residues 21–119 is cleaved from the precursor; that stretch reads AEILETRAGV…IERDARVQIN (99 aa). Positions 36-118 constitute an Inhibitor I9 domain; that stretch reads KYIVVMNDGM…YIERDARVQI (83 aa). Asparagine 58 carries N-linked (GlcNAc...) asparagine glycosylation. The region spanning 129 to 401 is the Peptidase S8 domain; sequence SWGLARVGSR…SKLINNGSGM (273 aa). Active-site charge relay system residues include aspartate 161 and histidine 193. Asparagine 223 and asparagine 253 each carry an N-linked (GlcNAc...) asparagine glycan. Catalysis depends on serine 347, which acts as the Charge relay system. A glycan (N-linked (GlcNAc...) asparagine) is linked at asparagine 397.

It belongs to the peptidase S8 family.

It localises to the secreted. Functionally, secreted subtilisin-like serine protease with keratinolytic activity that contributes to pathogenicity. The polypeptide is Subtilisin-like protease 7 (SUB7) (Trichophyton tonsurans (Scalp ringworm fungus)).